A 128-amino-acid polypeptide reads, in one-letter code: Small ribosomal subunit protein uS12 (128 aa).

A 3-methylthioaspartic acid modification is found at Asp89. Residues 101–128 are disordered; sequence SLDTSGVADRRNGRSKYGAKRPKEGAKK.

This sequence belongs to the universal ribosomal protein uS12 family. As to quaternary structure, part of the 30S ribosomal subunit. Contacts proteins S8 and S17. May interact with IF1 in the 30S initiation complex.

Functionally, with S4 and S5 plays an important role in translational accuracy. Interacts with and stabilizes bases of the 16S rRNA that are involved in tRNA selection in the A site and with the mRNA backbone. Located at the interface of the 30S and 50S subunits, it traverses the body of the 30S subunit contacting proteins on the other side and probably holding the rRNA structure together. The combined cluster of proteins S8, S12 and S17 appears to hold together the shoulder and platform of the 30S subunit. The polypeptide is Small ribosomal subunit protein uS12 (Chloroherpeton thalassium (strain ATCC 35110 / GB-78)).